A 147-amino-acid chain; its full sequence is Hemoglobin subunit epsilon (147 aa).

Residues 3-147 enclose the Globin domain; it reads HLTAEEKAAI…VAIALGHKYH (145 aa). Residues Ser14 and Ser51 each carry the phosphoserine modification. Residues His64 and His93 each contribute to the heme b site.

Belongs to the globin family. Heterotetramer of two alpha chains and two epsilon chains in early embryonic hemoglobin Gower-2; two zeta chains and two epsilon chains in early embryonic hemoglobin Gower-1. As to expression, red blood cells.

Its function is as follows. The epsilon chain is a beta-type chain of early mammalian embryonic hemoglobin. The protein is Hemoglobin subunit epsilon (HBE1) of Ateles belzebuth (White-bellied spider monkey).